A 324-amino-acid polypeptide reads, in one-letter code: Inhibitor of growth protein 1 homolog (324 aa).

The disordered stretch occupies residues 120 to 237 (AEEEKKKKKS…SSRKQKSMAA (118 aa)). Residues 140-169 (SSTTSSSSSSSSSSLSLSSSTNNTSSLNSS) are compositionally biased toward low complexity. Gly residues predominate over residues 170 to 186 (SGGGGGGSGGGGGGGGH). The segment covering 201–229 (SLTSSSSSGNINGMSSSSSSSSSSSSLSS) has biased composition (low complexity). The PHD-type zinc finger occupies 271–320 (PTYCFCNRVSFGEMVGCENPDCKIEWFHFECVGLTSTPKGKWYCPDCTRI). Zn(2+) is bound by residues Cys-274, Cys-276, Cys-287, Cys-292, His-298, Cys-301, Cys-314, and Cys-317.

Belongs to the ING family. As to quaternary structure, interacts with H3K4me3 and to a lesser extent with H3K4me2.

The protein localises to the nucleus. Functionally, involved in regulation of the growth and differentiation transition (GDT) process, probably by regulating gene expression via histone modification. This is Inhibitor of growth protein 1 homolog from Dictyostelium discoideum (Social amoeba).